A 262-amino-acid chain; its full sequence is UPF0758 protein R01728 (262 aa).

Positions 23-44 (PEKRTRNSPATAPAPATDTHYH) are disordered. Low complexity predominate over residues 31-40 (PATAPAPATD). Positions 140-262 (VLSSWSAVID…HVSLKGLRLF (123 aa)) constitute an MPN domain. Residues His211, His213, and Asp224 each coordinate Zn(2+). The short motif at 211–224 (HNHPSGDPTPSRAD) is the JAMM motif element.

The protein belongs to the UPF0758 family.

This chain is UPF0758 protein R01728, found in Rhizobium meliloti (strain 1021) (Ensifer meliloti).